Reading from the N-terminus, the 299-residue chain is Leucine zipper transcription factor-like protein 1 (299 aa).

Residues 96 to 296 adopt a coiled-coil conformation; the sequence is LKLQTDISEL…DLRKRLAQYE (201 aa). The segment at 145–299 is interaction with BSS9; the sequence is GTAELLNKEI…KRLAQYEPED (155 aa).

This sequence belongs to the LZTFL1 family. Self-associates. Interacts with BBS9; the interaction mediates the association of LZTL1 with the BBsome complex and regulates BBSome ciliary trafficking. As to expression, expressed in prostate, ovary, stomach, pancreas, esophagus, breast, liver, bladder, kidney, thyroid, colon and lung (at protein level). Down-regulated in multiple primary tumors (at protein level). Detected in testis, heart, skeletal muscle, thymus, spleen, small intestine, and peripheral blood leukocytes.

It localises to the cytoplasm. Functionally, regulates ciliary localization of the BBSome complex. Together with the BBSome complex, controls SMO ciliary trafficking and contributes to the sonic hedgehog (SHH) pathway regulation. May play a role in neurite outgrowth. May have tumor suppressor function. The chain is Leucine zipper transcription factor-like protein 1 (LZTFL1) from Homo sapiens (Human).